The sequence spans 504 residues: Anaerobic nitric oxide reductase transcription regulator NorR (504 aa).

D57 carries the 4-aspartylphosphate modification. Residues 187–416 form the Sigma-54 factor interaction domain; the sequence is MIGLSPGMTQ…LEHAIHRAVV (230 aa). Residues 215-222 and 278-287 each bind ATP; these read GETGTGKE and ADNGTLFLDE. Positions 479 to 498 form a DNA-binding region, H-T-H motif; it reads WAACARMLETDVANLHRLAK.

Its pathway is nitrogen metabolism; nitric oxide reduction. Functionally, required for the expression of anaerobic nitric oxide (NO) reductase, acts as a transcriptional activator for at least the norVW operon. Activation also requires sigma-54. The polypeptide is Anaerobic nitric oxide reductase transcription regulator NorR (Escherichia coli O139:H28 (strain E24377A / ETEC)).